We begin with the raw amino-acid sequence, 438 residues long: uncharacterized protein (438 aa).

Positions 1–19 (MKKLLLAASIICLASAGLA) are cleaved as a signal peptide.

This is an uncharacterized protein from Rickettsia conorii (strain ATCC VR-613 / Malish 7).